The primary structure comprises 430 residues: 3-phosphoshikimate 1-carboxyvinyltransferase (430 aa).

The 3-phosphoshikimate site is built by Lys20, Ser21, and Arg25. Position 20 (Lys20) interacts with phosphoenolpyruvate. The phosphoenolpyruvate site is built by Gly92 and Arg120. Residues Ser166, Gln168, Asp312, and Lys339 each coordinate 3-phosphoshikimate. Gln168 serves as a coordination point for phosphoenolpyruvate. Catalysis depends on Asp312, which acts as the Proton acceptor. 2 residues coordinate phosphoenolpyruvate: Arg343 and Arg387.

The protein belongs to the EPSP synthase family. As to quaternary structure, monomer.

The protein localises to the cytoplasm. It carries out the reaction 3-phosphoshikimate + phosphoenolpyruvate = 5-O-(1-carboxyvinyl)-3-phosphoshikimate + phosphate. Its pathway is metabolic intermediate biosynthesis; chorismate biosynthesis; chorismate from D-erythrose 4-phosphate and phosphoenolpyruvate: step 6/7. In terms of biological role, catalyzes the transfer of the enolpyruvyl moiety of phosphoenolpyruvate (PEP) to the 5-hydroxyl of shikimate-3-phosphate (S3P) to produce enolpyruvyl shikimate-3-phosphate and inorganic phosphate. The chain is 3-phosphoshikimate 1-carboxyvinyltransferase from Lactococcus lactis subsp. cremoris (strain MG1363).